The following is a 126-amino-acid chain: Probable prefoldin subunit 6 (126 aa).

The protein belongs to the prefoldin subunit beta family. Heterohexamer of two PFD-alpha type and four PFD-beta type subunits. Expressed in embryonic blastomeres and gonads.

The protein localises to the cytoplasm. Functionally, binds specifically to cytosolic chaperonin (c-CPN) and transfers target proteins to it. Binds to nascent polypeptide chain and promotes folding in an environment in which there are many competing pathways for nonnative proteins. Required for positioning of the mitotic spindle. This chain is Probable prefoldin subunit 6 (pfd-6), found in Caenorhabditis elegans.